Consider the following 502-residue polypeptide: Probable cytosol aminopeptidase (502 aa).

The Mn(2+) site is built by Lys-269 and Asp-274. Residue Lys-281 is part of the active site. Mn(2+) contacts are provided by Asp-292, Asp-351, and Glu-353. Arg-355 is an active-site residue.

The protein belongs to the peptidase M17 family. The cofactor is Mn(2+).

It localises to the cytoplasm. It carries out the reaction Release of an N-terminal amino acid, Xaa-|-Yaa-, in which Xaa is preferably Leu, but may be other amino acids including Pro although not Arg or Lys, and Yaa may be Pro. Amino acid amides and methyl esters are also readily hydrolyzed, but rates on arylamides are exceedingly low.. The enzyme catalyses Release of an N-terminal amino acid, preferentially leucine, but not glutamic or aspartic acids.. In terms of biological role, presumably involved in the processing and regular turnover of intracellular proteins. Catalyzes the removal of unsubstituted N-terminal amino acids from various peptides. This is Probable cytosol aminopeptidase from Shewanella denitrificans (strain OS217 / ATCC BAA-1090 / DSM 15013).